The sequence spans 29 residues: NADP phosphatase 1 (29 aa).

Homodimer.

The protein resides in the cytoplasm. The sequence is that of NADP phosphatase 1 from Arthrobacter sp. (strain KM).